Consider the following 37-residue polypeptide: MVEVLLSGIVLGLVPVTITGLFVAAYLQYRRGNQFGL.

A helical transmembrane segment spans residues 5–25; that stretch reads LLSGIVLGLVPVTITGLFVAA.

It belongs to the PetG family. In terms of assembly, the 4 large subunits of the cytochrome b6-f complex are cytochrome b6, subunit IV (17 kDa polypeptide, PetD), cytochrome f and the Rieske protein, while the 4 small subunits are PetG, PetL, PetM and PetN. The complex functions as a dimer.

It localises to the plastid. The protein localises to the chloroplast thylakoid membrane. Component of the cytochrome b6-f complex, which mediates electron transfer between photosystem II (PSII) and photosystem I (PSI), cyclic electron flow around PSI, and state transitions. PetG is required for either the stability or assembly of the cytochrome b6-f complex. This is Cytochrome b6-f complex subunit 5 from Emiliania huxleyi (Coccolithophore).